The chain runs to 222 residues: Putative N-acetylmannosamine-6-phosphate 2-epimerase (222 aa).

This sequence belongs to the NanE family.

It catalyses the reaction an N-acyl-D-glucosamine 6-phosphate = an N-acyl-D-mannosamine 6-phosphate. It participates in amino-sugar metabolism; N-acetylneuraminate degradation; D-fructose 6-phosphate from N-acetylneuraminate: step 3/5. Converts N-acetylmannosamine-6-phosphate (ManNAc-6-P) to N-acetylglucosamine-6-phosphate (GlcNAc-6-P). The protein is Putative N-acetylmannosamine-6-phosphate 2-epimerase of Staphylococcus aureus (strain Mu3 / ATCC 700698).